We begin with the raw amino-acid sequence, 285 residues long: Hydroxyethylthiazole kinase 1 (285 aa).

Met-48 provides a ligand contact to substrate. Residues Arg-124 and Ser-183 each coordinate ATP. Position 210 (Gly-210) interacts with substrate.

This sequence belongs to the Thz kinase family. Mg(2+) is required as a cofactor.

It carries out the reaction 5-(2-hydroxyethyl)-4-methylthiazole + ATP = 4-methyl-5-(2-phosphooxyethyl)-thiazole + ADP + H(+). Its pathway is cofactor biosynthesis; thiamine diphosphate biosynthesis; 4-methyl-5-(2-phosphoethyl)-thiazole from 5-(2-hydroxyethyl)-4-methylthiazole: step 1/1. In terms of biological role, catalyzes the phosphorylation of the hydroxyl group of 4-methyl-5-beta-hydroxyethylthiazole (THZ). This chain is Hydroxyethylthiazole kinase 1, found in Methanosphaera stadtmanae (strain ATCC 43021 / DSM 3091 / JCM 11832 / MCB-3).